Consider the following 306-residue polypeptide: Tyrosine recombinase EUBREC_2677 (306 aa).

The region spanning 2–84 (NNLQTHISSY…SIKAFFHYLE (83 aa)) is the Core-binding (CB) domain. In terms of domain architecture, Tyr recombinase spans 106 to 296 (ILPKTIPLYI…AVSKQKDILI (191 aa)). Residues arginine 155, lysine 179, histidine 248, arginine 251, and histidine 274 contribute to the active site. The active-site O-(3'-phospho-DNA)-tyrosine intermediate is the tyrosine 283.

It belongs to the 'phage' integrase family.

The protein localises to the cytoplasm. Functionally, site-specific tyrosine recombinase, which acts by catalyzing the cutting and rejoining of the recombining DNA molecules. The chain is Tyrosine recombinase EUBREC_2677 from Agathobacter rectalis (strain ATCC 33656 / DSM 3377 / JCM 17463 / KCTC 5835 / VPI 0990) (Eubacterium rectale).